The chain runs to 362 residues: Dihydroorotate dehydrogenase (quinone) (362 aa).

FMN contacts are provided by residues 62 to 66 and Thr86; that span reads AGYDK. Lys66 serves as a coordination point for substrate. Residue 111-115 participates in substrate binding; that stretch reads NRLGF. 2 residues coordinate FMN: Asn139 and Asn170. Position 170 (Asn170) interacts with substrate. Ser173 serves as the catalytic Nucleophile. A substrate-binding site is contributed by Asn175. FMN is bound by residues Lys215 and Ser243. 244–245 provides a ligand contact to substrate; the sequence is NT. Residues Gly266, Gly295, and 316–317 contribute to the FMN site; that span reads YS.

Belongs to the dihydroorotate dehydrogenase family. Type 2 subfamily. As to quaternary structure, monomer. FMN serves as cofactor.

It is found in the cell membrane. The catalysed reaction is (S)-dihydroorotate + a quinone = orotate + a quinol. The protein operates within pyrimidine metabolism; UMP biosynthesis via de novo pathway; orotate from (S)-dihydroorotate (quinone route): step 1/1. In terms of biological role, catalyzes the conversion of dihydroorotate to orotate with quinone as electron acceptor. The protein is Dihydroorotate dehydrogenase (quinone) of Rhizobium rhizogenes (strain K84 / ATCC BAA-868) (Agrobacterium radiobacter).